A 588-amino-acid polypeptide reads, in one-letter code: Adenine deaminase (588 aa).

It belongs to the metallo-dependent hydrolases superfamily. Adenine deaminase family. As to quaternary structure, homodimer. Mn(2+) is required as a cofactor.

The enzyme catalyses adenine + H2O + H(+) = hypoxanthine + NH4(+). The chain is Adenine deaminase from Escherichia coli O7:K1 (strain IAI39 / ExPEC).